The following is a 213-amino-acid chain: Homeobox protein koza (213 aa).

The interval 24-72 (ILSHMGPGSKEKSLGFPKTDQDQDSSLRDTEEKYASEKLQSSSQPAEIH) is disordered. The span at 32–59 (SKEKSLGFPKTDQDQDSSLRDTEEKYAS) shows a compositional bias: basic and acidic residues. Positions 102-161 (QKRSRAAFSHSQVIELERKFSSQKYLSAPERAQLAKSLKLTETQVKIWFQNRRYKTKRKQ) form a DNA-binding region, homeobox.

Belongs to the NK-3 homeobox family. As to expression, expressed in the muscle layer of embryonic somites. In tailbud embryos, expressed throughout the entire myotome but at the mid-tailbud stage (stage 32), expression becomes restricted to the outer periphery of the somite so that by the tadpole stage only the outer, type I cells show expression. Also expressed in the dorsal cement gland and in the myocardial layer of the developing heart. In all tissues, expression begins after terminal differentiation.

The protein resides in the nucleus. Functionally, may regulate cell proliferation in a tissue-specific manner. The protein is Homeobox protein koza of Xenopus laevis (African clawed frog).